The following is a 530-amino-acid chain: Calnexin homolog 1 (530 aa).

An N-terminal signal peptide occupies residues 1-20 (MRQRQLFSVFLLLLAFVSFQ). Over 21-466 (KLCYCDDQTV…EKAEQQPNLT (446 aa)) the chain is Lumenal. Ca(2+)-binding residues include Ser34 and Asp65. A disulfide bond links Cys108 and Cys143. An alpha-D-glucoside contacts are provided by Tyr112, Lys114, Tyr134, and Asp141. Positions 216-315 (ALIPAKTIPD…KCEAAPGCGE (100 aa)) are disordered. Positions 223–356 (IPDPEDKKPE…RDIPNPDYFE (134 aa)) are p domain (Extended arm). The span at 224–240 (PDPEDKKPEDWDERAKI) shows a compositional bias: basic and acidic residues. Tandem repeats lie at residues 225–236 (DPEDKKPEDWDE), 242–253 (DPNAVKPEDWDE), 261–272 (DEEAEKPEGWLD), 280–291 (DPEATKPEDWDD), and 295–305 (GMWEAPKIDNP). 4 X approximate repeats regions lie at residues 225–291 (DPED…DWDD) and 295–352 (GMWE…IPNP). The span at 250 to 281 (DWDEDAPMEIEDEEAEKPEGWLDDEPEEVDDP) shows a compositional bias: acidic residues. The cysteines at positions 307 and 313 are disulfide-linked. 3 consecutive repeat copies span residues 314 to 324 (GEWKRPMKRNP), 328 to 338 (GKWSSPLIDNP), and 342 to 352 (GIWKPRDIPNP). Glu371 lines the an alpha-D-glucoside pocket. A Ca(2+)-binding site is contributed by Asp382. Residue Asn464 is glycosylated (N-linked (GlcNAc...) asparagine). A helical transmembrane segment spans residues 467-487 (IGVLVAIVVVFFSLFLKLIFG). Topologically, residues 488-530 (GKKAAAPVEKKKPEVAESSKSGDEAEKKEETAAPRKRQPRRDN) are cytoplasmic. The segment at 490–530 (KAAAPVEKKKPEVAESSKSGDEAEKKEETAAPRKRQPRRDN) is disordered. Over residues 495-520 (VEKKKPEVAESSKSGDEAEKKEETAA) the composition is skewed to basic and acidic residues. At Ser508 the chain carries Phosphoserine. Positions 521-530 (PRKRQPRRDN) are enriched in basic residues.

Belongs to the calreticulin family.

It is found in the endoplasmic reticulum membrane. In terms of biological role, calcium-binding protein that interacts with newly synthesized monoglucosylated glycoproteins in the endoplasmic reticulum. It may act in assisting protein assembly and/or in the retention within the ER of unassembled protein subunits. It seems to play a major role in the quality control apparatus of the ER by the retention of incorrectly folded proteins. The chain is Calnexin homolog 1 (CNX1) from Arabidopsis thaliana (Mouse-ear cress).